Here is a 152-residue protein sequence, read N- to C-terminus: Ribonuclease H (152 aa).

The RNase H type-1 domain maps to 1-142 (MDSKVVIYTD…ADKLAVQGRE (142 aa)). Asp10, Glu48, Asp70, and Asp134 together coordinate Mg(2+).

It belongs to the RNase H family. In terms of assembly, monomer. The cofactor is Mg(2+).

The protein resides in the cytoplasm. The catalysed reaction is Endonucleolytic cleavage to 5'-phosphomonoester.. In terms of biological role, endonuclease that specifically degrades the RNA of RNA-DNA hybrids. The polypeptide is Ribonuclease H (Rickettsia felis (strain ATCC VR-1525 / URRWXCal2) (Rickettsia azadi)).